A 137-amino-acid chain; its full sequence is Large ribosomal subunit protein uL16 (137 aa).

The protein belongs to the universal ribosomal protein uL16 family. As to quaternary structure, part of the 50S ribosomal subunit.

Binds 23S rRNA and is also seen to make contacts with the A and possibly P site tRNAs. The polypeptide is Large ribosomal subunit protein uL16 (Rhizobium johnstonii (strain DSM 114642 / LMG 32736 / 3841) (Rhizobium leguminosarum bv. viciae)).